We begin with the raw amino-acid sequence, 308 residues long: Ribosomal protein L11 methyltransferase (308 aa).

The S-adenosyl-L-methionine site is built by Thr148, Gly169, Asp191, and Asn239.

The protein belongs to the methyltransferase superfamily. PrmA family.

It is found in the cytoplasm. The catalysed reaction is L-lysyl-[protein] + 3 S-adenosyl-L-methionine = N(6),N(6),N(6)-trimethyl-L-lysyl-[protein] + 3 S-adenosyl-L-homocysteine + 3 H(+). Its function is as follows. Methylates ribosomal protein L11. This is Ribosomal protein L11 methyltransferase from Psychrobacter cryohalolentis (strain ATCC BAA-1226 / DSM 17306 / VKM B-2378 / K5).